Reading from the N-terminus, the 84-residue chain is Putative membrane protein insertion efficiency factor (84 aa).

A disordered region spans residues 63–84 (WGGSGYDPVPGADPEHDRRPRG). The segment covering 75–84 (DPEHDRRPRG) has biased composition (basic and acidic residues).

This sequence belongs to the UPF0161 family.

Its subcellular location is the cell inner membrane. Functionally, could be involved in insertion of integral membrane proteins into the membrane. This is Putative membrane protein insertion efficiency factor from Cereibacter sphaeroides (strain ATCC 17029 / ATH 2.4.9) (Rhodobacter sphaeroides).